The chain runs to 291 residues: Cytochrome c-552 (291 aa).

A signal peptide spans 1–23 (MKKTLMASAVGAVIAFGTHGAMA). The heme c site is built by C68, C71, H72, C157, C161, and H162.

Post-translationally, binds 2 heme c groups per subunit.

The protein localises to the periplasm. Its function is as follows. May play a role in nitrite reduction. Shows peroxidase activity on proteolytic modification. The chain is Cytochrome c-552 (nirB) from Stutzerimonas stutzeri (Pseudomonas stutzeri).